The chain runs to 728 residues: 1,4-alpha-glucan branching enzyme GlgB (728 aa).

Asp-405 acts as the Nucleophile in catalysis. Glu-458 acts as the Proton donor in catalysis.

This sequence belongs to the glycosyl hydrolase 13 family. GlgB subfamily. Monomer.

The enzyme catalyses Transfers a segment of a (1-&gt;4)-alpha-D-glucan chain to a primary hydroxy group in a similar glucan chain.. The protein operates within glycan biosynthesis; glycogen biosynthesis. Catalyzes the formation of the alpha-1,6-glucosidic linkages in glycogen by scission of a 1,4-alpha-linked oligosaccharide from growing alpha-1,4-glucan chains and the subsequent attachment of the oligosaccharide to the alpha-1,6 position. This Citrobacter koseri (strain ATCC BAA-895 / CDC 4225-83 / SGSC4696) protein is 1,4-alpha-glucan branching enzyme GlgB.